A 206-amino-acid chain; its full sequence is Cytochrome b6-f complex iron-sulfur subunit, chloroplastic (206 aa).

A chloroplast-targeting transit peptide spans 1–29 (MAMITSRRAAAPCKAQATRRSRVMSVVRA). Residues 48–68 (ILLGGASLPVGSLALGYGAFF) form a helical membrane-spanning segment. The region spanning 92-188 (ANAWLATHQK…CDVQEDGLVT (97 aa)) is the Rieske domain. Positions 134, 136, 152, and 155 each coordinate [2Fe-2S] cluster. A disulfide bond links C139 and C154.

The protein belongs to the Rieske iron-sulfur protein family. The 4 large subunits of the cytochrome b6-f complex are cytochrome b6, subunit IV (17 kDa polypeptide, petD), cytochrome f and the Rieske protein, while the 4 small subunits are petG, petL, petM and petN. The complex functions as a dimer. [2Fe-2S] cluster serves as cofactor.

It is found in the plastid. The protein resides in the chloroplast thylakoid membrane. It catalyses the reaction 2 oxidized [plastocyanin] + a plastoquinol + 2 H(+)(in) = 2 reduced [plastocyanin] + a plastoquinone + 4 H(+)(out). Its function is as follows. Component of the cytochrome b6-f complex, which mediates electron transfer between photosystem II (PSII) and photosystem I (PSI), cyclic electron flow around PSI, and state transitions. This is Cytochrome b6-f complex iron-sulfur subunit, chloroplastic (petC) from Volvox carteri (Green alga).